Here is a 176-residue protein sequence, read N- to C-terminus: ATP synthase subunit delta (176 aa).

Belongs to the ATPase delta chain family. F-type ATPases have 2 components, F(1) - the catalytic core - and F(0) - the membrane proton channel. F(1) has five subunits: alpha(3), beta(3), gamma(1), delta(1), epsilon(1). F(0) has three main subunits: a(1), b(2) and c(10-14). The alpha and beta chains form an alternating ring which encloses part of the gamma chain. F(1) is attached to F(0) by a central stalk formed by the gamma and epsilon chains, while a peripheral stalk is formed by the delta and b chains.

The protein resides in the cell inner membrane. Functionally, f(1)F(0) ATP synthase produces ATP from ADP in the presence of a proton or sodium gradient. F-type ATPases consist of two structural domains, F(1) containing the extramembraneous catalytic core and F(0) containing the membrane proton channel, linked together by a central stalk and a peripheral stalk. During catalysis, ATP synthesis in the catalytic domain of F(1) is coupled via a rotary mechanism of the central stalk subunits to proton translocation. This protein is part of the stalk that links CF(0) to CF(1). It either transmits conformational changes from CF(0) to CF(1) or is implicated in proton conduction. The polypeptide is ATP synthase subunit delta (Actinobacillus succinogenes (strain ATCC 55618 / DSM 22257 / CCUG 43843 / 130Z)).